Here is a 90-residue protein sequence, read N- to C-terminus: RNA-binding protein Hfq (90 aa).

Residues 9 to 69 enclose the Sm domain; that stretch reads DRFLNHLRVN…ISTIIPSSYV (61 aa).

It belongs to the Hfq family. Homohexamer.

Functionally, RNA chaperone that binds small regulatory RNA (sRNAs) and mRNAs to facilitate mRNA translational regulation in response to envelope stress, environmental stress and changes in metabolite concentrations. Also binds with high specificity to tRNAs. The sequence is that of RNA-binding protein Hfq from Thermotoga sp. (strain RQ2).